The following is a 62-amino-acid chain: Beta-defensin 110 (62 aa).

An N-terminal signal peptide occupies residues M1 to S21. Cystine bridges form between C32-C60, C39-C53, and C43-C61.

The protein belongs to the beta-defensin family.

It localises to the secreted. In terms of biological role, has antibacterial activity. The sequence is that of Beta-defensin 110 (DEFB110) from Canis lupus familiaris (Dog).